The sequence spans 374 residues: MAGARQAVGEARRIVVKVGSSSLTTAAGGLDADRVDALVDVLAKMRGADKEVVLVSSGAIAAGLAPLGLPRRPRDLARQQAAASVGQGLLVARYTASFARYGVRVGQVLLTSDDMSRRAHHRNASRTLDKLLAMGAFPIVNENDTVATDEIRFGDNDRLAALVAHLVRADLLVLLSDVDGVYDGDPSRPGTSRLAEVRDMGDLAGVDIGSAGKAGVGTGGMVTKVEAARIAAAAGIPVVLTSAVHAADALAGGDTGTYFHATGRRSADRLLWLQHASAPQGALVLDDGAVRAVVEGRKSLLPAGIAGVEGDFAAGDPVELRDGTGRAVARGLVNFDAKEMPRLIGRSTRELARELGPAYEREVVHRDDLVILHP.

Lys17 contacts ATP. 3 residues coordinate substrate: Ser57, Asp144, and Asn156. ATP contacts are provided by residues 176–177 (SD) and 218–224 (TGGMVTK). In terms of domain architecture, PUA spans 280–358 (QGALVLDDGA…RELARELGPA (79 aa)).

Belongs to the glutamate 5-kinase family.

The protein localises to the cytoplasm. It catalyses the reaction L-glutamate + ATP = L-glutamyl 5-phosphate + ADP. Its pathway is amino-acid biosynthesis; L-proline biosynthesis; L-glutamate 5-semialdehyde from L-glutamate: step 1/2. Functionally, catalyzes the transfer of a phosphate group to glutamate to form L-glutamate 5-phosphate. The chain is Glutamate 5-kinase from Streptomyces coelicolor (strain ATCC BAA-471 / A3(2) / M145).